The sequence spans 382 residues: MSLIIFTSAQRLRSVCRLQRIHGHMMSSKAGSEVLFEKVGKAGVITLNRPKALNALTLNMIRHIYPQLKKWDKDSETDIVIIKGAGEKAFCAGGDIRAIAEAGKAGNLLSQVFFREEYILNNTIGTYQKPYVALINGITMGGGVGLSVHGQFRVATEKTLFAMPETGIGLFPDVGGGYFLPRLQGKLGLFLALTGFRLKGRDVQRVGVATHFVQSEKIESLEKDLVDLKSPSISDVAQLLDSYQEQSHLDAEKPFVLQEQTEAIDRLFSAGSVEEIVENLKKDGSAFALKQAETLAKMSPTSLKLTFRQIEEGARMSLQEVFMMEYRLSQACMNGHDFYEGVRAVLIDKDQSPKWKPSTLAGVSEQFVDKCFSSLDERDLKL.

Substrate is bound by residues glutamate 117, glycine 142, glutamate 165, and aspartate 173.

The protein belongs to the enoyl-CoA hydratase/isomerase family.

It localises to the mitochondrion. The enzyme catalyses 3-hydroxy-2-methylpropanoyl-CoA + H2O = 3-hydroxy-2-methylpropanoate + CoA + H(+). Its pathway is amino-acid degradation; L-valine degradation. Functionally, hydrolyzes 3-hydroxyisobutyryl-CoA (HIBYL-CoA), a saline catabolite. Has high activity toward isobutyryl-CoA. Could be an isobutyryl-CoA dehydrogenase that functions in valine catabolism. Also hydrolyzes 3-hydroxypropanoyl-CoA. The polypeptide is 3-hydroxyisobutyryl-CoA hydrolase, mitochondrial (hibch) (Danio rerio (Zebrafish)).